Here is a 321-residue protein sequence, read N- to C-terminus: MRSTIVATFAAGLVVASLVAAHGIVTDIEIDGEWYTSSLVFEDPYKIPIPERISWSFFGSGNSPVADFTTRDIVCNGNASAAALVAEVDAGAEITFYWDTWPESHKGPVMTYLANCGSDCRTVDPGALFYFKIDHAGLEDGEWISDQIIANNLSYTITIPEDIAPGNYLIRHELLALHLASDELGAQFYPMCANLRISGSGIINPTGVQFPGAYKMDDPGILVNIYNDIDTYTIPGPPPYNSDSEFSDDDFESVAEISAASVSVFNSSDFIASTLTKSYSALASVYTKPSTSDFKLKKSFSLSSVSVPDGSSDNFDCNVNG.

A signal peptide spans 1-21 (MRSTIVATFAAGLVVASLVAA). Histidine 22 contacts Cu(2+). 2 disulfides stabilise this stretch: cysteine 75-cysteine 192 and cysteine 116-cysteine 120. Asparagine 78 carries an N-linked (GlcNAc...) asparagine glycan. Histidine 105 contacts Cu(2+). A glycan (N-linked (GlcNAc...) asparagine) is linked at asparagine 152. O2 is bound by residues histidine 178 and glutamine 187. Tyrosine 189 contacts Cu(2+). Asparagine 266 carries N-linked (GlcNAc...) asparagine glycosylation.

It belongs to the polysaccharide monooxygenase AA9 family. Requires Cu(2+) as cofactor.

It is found in the secreted. It catalyses the reaction [(1-&gt;4)-beta-D-glucosyl]n+m + reduced acceptor + O2 = 4-dehydro-beta-D-glucosyl-[(1-&gt;4)-beta-D-glucosyl]n-1 + [(1-&gt;4)-beta-D-glucosyl]m + acceptor + H2O.. In terms of biological role, lytic polysaccharide monooxygenase (LPMO) that depolymerizes crystalline and amorphous polysaccharides via the oxidation of scissile alpha- or beta-(1-4)-glycosidic bonds, yielding C1 or C4 oxidation products. Catalysis by LPMOs requires the reduction of the active-site copper from Cu(II) to Cu(I) by a reducing agent and H(2)O(2) or O(2) as a cosubstrate. The polypeptide is AA9 family lytic polysaccharide monooxygenase D (Geotrichum candidum (Oospora lactis)).